Consider the following 31-residue polypeptide: Cytochrome b6-f complex subunit 6 (31 aa).

Residues 4 to 24 (ITSYFGFLLAALTITPALFIG) form a helical membrane-spanning segment.

It belongs to the PetL family. As to quaternary structure, the 4 large subunits of the cytochrome b6-f complex are cytochrome b6, subunit IV (17 kDa polypeptide, PetD), cytochrome f and the Rieske protein, while the 4 small subunits are PetG, PetL, PetM and PetN. The complex functions as a dimer.

Its subcellular location is the plastid. It localises to the chloroplast thylakoid membrane. Its function is as follows. Component of the cytochrome b6-f complex, which mediates electron transfer between photosystem II (PSII) and photosystem I (PSI), cyclic electron flow around PSI, and state transitions. PetL is important for photoautotrophic growth as well as for electron transfer efficiency and stability of the cytochrome b6-f complex. This is Cytochrome b6-f complex subunit 6 from Saccharum barberi (Indian sugarcane).